The following is a 937-amino-acid chain: AP-2 complex subunit beta (937 aa).

Position 2 is an N-acetylthreonine (Thr2). Ser4 is modified (phosphoserine). N6-acetyllysine is present on Lys265. The residue at position 737 (Tyr737) is a Phosphotyrosine; by SRC. Positions 841 to 937 are interaction with ARRB1; it reads WKDIPNENEL…YQVYDSILKN (97 aa). Tyr928 carries the post-translational modification Phosphotyrosine.

This sequence belongs to the adaptor complexes large subunit family. As to quaternary structure, adaptor protein complex 2 (AP-2) is a heterotetramer composed of two large adaptins (alpha-type subunit AP2A1 or AP2A2 and beta-type subunit AP2B1), a medium adaptin (mu-type subunit AP2M1) and a small adaptin (sigma-type subunit AP2S1). Interacts with EPN1. Interacts with EPS15; clathrin competes with EPS15. Interacts with SNAP91; clathrin competes with SNAP91. Interacts with CLTC; clathrin competes with EPS15, SNAP91 and PIP5K1C. Interacts with LDLRAP1. Interacts with AMPH and BIN1. Interacts with ARF6 (GDP-bound). Interacts (dephosphorylated at Tyr-737) with ARRB1; phosphorylation of AP2B1 at Tyr-737 disrupts the interaction. Interacts with SLC2A8. Interacts with SCYL1 and SCYL2. Interacts with TGFBR1 and TGFBR2. Interacts with PIP5K1C; clathrin competes with PIP5K1C. Interacts with DENND1B, but not with DENND1A, nor DENND1C. Interacts with FCHO1. Interacts with RFTN1. Interacts with KIAA1107. Together with AP2A1 or AP2A2 and AP2M1, it interacts with ADAM10; this interaction facilitates ADAM10 endocytosis from the plasma membrane during long-term potentiation in hippocampal neurons. In terms of processing, phosphorylation at Tyr-737 by SRC occurs at the plasma membrane in clathrin-coated vesicles (CCVs). Expressed in the brain (at protein level).

The protein localises to the cell membrane. Its subcellular location is the membrane. It is found in the coated pit. Component of the adaptor protein complex 2 (AP-2). Adaptor protein complexes function in protein transport via transport vesicles in different membrane traffic pathways. Adaptor protein complexes are vesicle coat components and appear to be involved in cargo selection and vesicle formation. AP-2 is involved in clathrin-dependent endocytosis in which cargo proteins are incorporated into vesicles surrounded by clathrin (clathrin-coated vesicles, CCVs) which are destined for fusion with the early endosome. The clathrin lattice serves as a mechanical scaffold but is itself unable to bind directly to membrane components. Clathrin-associated adaptor protein (AP) complexes which can bind directly to both the clathrin lattice and to the lipid and protein components of membranes are considered to be the major clathrin adaptors contributing the CCV formation. AP-2 also serves as a cargo receptor to selectively sort the membrane proteins involved in receptor-mediated endocytosis. AP-2 seems to play a role in the recycling of synaptic vesicle membranes from the presynaptic surface. AP-2 recognizes Y-X-X-[FILMV] (Y-X-X-Phi) and [ED]-X-X-X-L-[LI] endocytosis signal motifs within the cytosolic tails of transmembrane cargo molecules. AP-2 may also play a role in maintaining normal post-endocytic trafficking through the ARF6-regulated, non-clathrin pathway. During long-term potentiation in hippocampal neurons, AP-2 is responsible for the endocytosis of ADAM10. The AP-2 beta subunit acts via its C-terminal appendage domain as a scaffolding platform for endocytic accessory proteins; at least some clathrin-associated sorting proteins (CLASPs) are recognized by their [DE]-X(1,2)-F-X-X-[FL]-X-X-X-R motif. The AP-2 beta subunit binds to clathrin heavy chain, promoting clathrin lattice assembly; clathrin displaces at least some CLASPs from AP2B1 which probably then can be positioned for further coat assembly. The chain is AP-2 complex subunit beta (AP2B1) from Homo sapiens (Human).